Consider the following 343-residue polypeptide: Dihydroorotase (343 aa).

Residues H13 and H15 each contribute to the Zn(2+) site. Residues 15-17 and N41 contribute to the substrate site; that span reads HFR. 3 residues coordinate Zn(2+): K98, H135, and H173. K98 carries the post-translational modification N6-carboxylysine. H135 contributes to the substrate binding site. L218 provides a ligand contact to substrate. D246 provides a ligand contact to Zn(2+). Residue D246 is part of the active site. Positions 250 and 262 each coordinate substrate.

This sequence belongs to the metallo-dependent hydrolases superfamily. DHOase family. Class II DHOase subfamily. Homodimer. The cofactor is Zn(2+).

It carries out the reaction (S)-dihydroorotate + H2O = N-carbamoyl-L-aspartate + H(+). Its pathway is pyrimidine metabolism; UMP biosynthesis via de novo pathway; (S)-dihydroorotate from bicarbonate: step 3/3. Its function is as follows. Catalyzes the reversible cyclization of carbamoyl aspartate to dihydroorotate. The sequence is that of Dihydroorotase from Marinomonas sp. (strain MWYL1).